Reading from the N-terminus, the 224-residue chain is MSTWGQINLMDPASPIQMEMMLFHDHAMAILIGIFTLVSLLGVKLCFNTLSTRTMHEAQLLETLWTILPAFLLVWLALPSLRLLYLLDEQGSEGIILKAIGHQWYWSYEMPSMNISNFDSYMIPEEDLKPGDYRLLEVDNRPMVPYGLDINVITTSADVIHAWALPSMGVKMDAVPGRLNSMGFHANLPGIYYGQCSEICGANHSFMPITVEAIDVKDFIKMCN.

The Mitochondrial intermembrane portion of the chain corresponds to 1–26; sequence MSTWGQINLMDPASPIQMEMMLFHDH. The chain crosses the membrane as a helical span at residues 27–48; sequence AMAILIGIFTLVSLLGVKLCFN. The Mitochondrial matrix portion of the chain corresponds to 49–62; it reads TLSTRTMHEAQLLE. Residues 63–82 form a helical membrane-spanning segment; that stretch reads TLWTILPAFLLVWLALPSLR. The Mitochondrial intermembrane segment spans residues 83 to 224; that stretch reads LLYLLDEQGS…DVKDFIKMCN (142 aa). Residues H161, C196, E198, C200, H204, and M207 each contribute to the Cu cation site. E198 contacts Mg(2+).

This sequence belongs to the cytochrome c oxidase subunit 2 family. In terms of assembly, component of the cytochrome c oxidase (complex IV, CIV), a multisubunit enzyme composed of a catalytic core of 3 subunits and several supernumerary subunits. The complex exists as a monomer or a dimer and forms supercomplexes (SCs) in the inner mitochondrial membrane with ubiquinol-cytochrome c oxidoreductase (cytochrome b-c1 complex, complex III, CIII). Cu cation serves as cofactor.

The protein localises to the mitochondrion inner membrane. It carries out the reaction 4 Fe(II)-[cytochrome c] + O2 + 8 H(+)(in) = 4 Fe(III)-[cytochrome c] + 2 H2O + 4 H(+)(out). Functionally, component of the cytochrome c oxidase, the last enzyme in the mitochondrial electron transport chain which drives oxidative phosphorylation. The respiratory chain contains 3 multisubunit complexes succinate dehydrogenase (complex II, CII), ubiquinol-cytochrome c oxidoreductase (cytochrome b-c1 complex, complex III, CIII) and cytochrome c oxidase (complex IV, CIV), that cooperate to transfer electrons derived from NADH and succinate to molecular oxygen, creating an electrochemical gradient over the inner membrane that drives transmembrane transport and the ATP synthase. Cytochrome c oxidase is the component of the respiratory chain that catalyzes the reduction of oxygen to water. Electrons originating from reduced cytochrome c in the intermembrane space (IMS) are transferred via the dinuclear copper A center (CU(A)) of subunit 2 and heme A of subunit 1 to the active site in subunit 1, a binuclear center (BNC) formed by heme A3 and copper B (CU(B)). The BNC reduces molecular oxygen to 2 water molecules using 4 electrons from cytochrome c in the IMS and 4 protons from the mitochondrial matrix. This Albinaria caerulea (Land snail) protein is Cytochrome c oxidase subunit 2 (COII).